The sequence spans 67 residues: Penaeidin-4d (67 aa).

A signal peptide spans 1–19 (MRLLVCLVFLASFAMVCQG). Cystine bridges form between Cys-42–Cys-56, Cys-45–Cys-63, and Cys-57–Cys-64. Residue Leu-66 is modified to Leucine amide.

The protein belongs to the penaeidin family.

The protein resides in the cytoplasmic granule. Functionally, antibacterial and antifungal activity. Presents chitin-binding activity. The polypeptide is Penaeidin-4d (Penaeus setiferus (Atlantic white shrimp)).